A 172-amino-acid polypeptide reads, in one-letter code: Shikimate kinase (172 aa).

14–19 is an ATP binding site; that stretch reads GAGKST. Ser-18 is a binding site for Mg(2+). Substrate-binding residues include Asp-36, Arg-60, and Gly-82. ATP is bound at residue Arg-120. Arg-139 provides a ligand contact to substrate. Residue Gln-156 participates in ATP binding.

It belongs to the shikimate kinase family. Monomer. It depends on Mg(2+) as a cofactor.

Its subcellular location is the cytoplasm. It carries out the reaction shikimate + ATP = 3-phosphoshikimate + ADP + H(+). It functions in the pathway metabolic intermediate biosynthesis; chorismate biosynthesis; chorismate from D-erythrose 4-phosphate and phosphoenolpyruvate: step 5/7. Its function is as follows. Catalyzes the specific phosphorylation of the 3-hydroxyl group of shikimic acid using ATP as a cosubstrate. This chain is Shikimate kinase, found in Vibrio campbellii (strain ATCC BAA-1116).